The following is a 1096-amino-acid chain: uncharacterized protein (1096 aa).

Belongs to the IIV-6 261R/396L/443R family.

This is an uncharacterized protein from Invertebrate iridescent virus 3 (IIV-3).